The following is a 604-amino-acid chain: Numb-like protein (604 aa).

Disordered regions lie at residues 1–68 (MSRS…QWQA), 223–283 (GSFR…PVAA), 372–457 (ASAG…TLQP), and 531–604 (KAGA…EIEL). The PID domain maps to 74–225 (RKGTCSFPVR…RTSFAREGSF (152 aa)). A phosphoserine mark is found at Ser224 and Ser228. Over residues 233–245 (PAEREAGDKKKAE) the composition is skewed to basic and acidic residues. Positions 246 to 260 (AAAAPAVAPGPAQPG) are enriched in low complexity. The residue at position 263 (Ser263) is a Phosphoserine. Thr279 is modified (phosphothreonine). The segment covering 409 to 418 (TPSEAERWLE) has biased composition (basic and acidic residues). Residue Ser411 is modified to Phosphoserine. 2 stretches are compositionally biased toward low complexity: residues 427–441 (QQQQ…QQQQ) and 542–552 (SAPGGQARPRP). Residues 553 to 568 (NGAPWPPEPAPAPAPE) show a composition bias toward pro residues.

As to quaternary structure, interacts (via PTB domain) with MAP3K7IP2 (via C-terminal). Interacts (via C-terminal) with TRAF6 (via TRAF domains). Associates with EPS15 and NOTCH1. As to expression, preferentially expressed in the nervous system. In the developing neocortex, expressed in postmitotic neurons in the cortical plate but not in progenitors within the ventricular zone.

It localises to the cytoplasm. Functionally, plays a role in the process of neurogenesis. Required throughout embryonic neurogenesis to maintain neural progenitor cells, also called radial glial cells (RGCs), by allowing their daughter cells to choose progenitor over neuronal cell fate. Not required for the proliferation of neural progenitor cells before the onset of embryonic neurogenesis. Also required postnatally in the subventricular zone (SVZ) neurogenesis by regulating SVZ neuroblasts survival and ependymal wall integrity. Negative regulator of NF-kappa-B signaling pathway. The inhibition of NF-kappa-B activation is mediated at least in part, by preventing MAP3K7IP2 to interact with polyubiquitin chains of TRAF6 and RIPK1 and by stimulating the 'Lys-48'-linked polyubiquitination and degradation of TRAF6 in cortical neurons. The chain is Numb-like protein (Numbl) from Mus musculus (Mouse).